The sequence spans 374 residues: MTDRLRATYRVKATAASIEARAKGIAVEQSVEMPLSAIDDPAVLDGIVGVVEEITERGEDCFEVRLALSTATIGGDAGQLFNMLFGNTSLQDDTVLLDIDLPDDLLASFGGPNIGAAGLRARVGASADRALTCSALKPQGLPPDRLADLARRMALGGLDFIKDDHGMADQAYAPFASRVGAVAAAVDEVNRQTGGQTRYLPSLSGHLDQLRSQVRTGLDHGIDTFLIAPMIVGPSTFHAVVREFPGAAFFAHPTLAGPSRIAPPAHFGKLFRLLGADAVIFPNSGGRFGYSRDTCQAVAEAALGPWGGLHASLPVPAGGMSLARVPEMIATYGPDVIVLIGGNLLEARDRLTEETAAFVASVAGAASRGCGLAP.

It belongs to the RuBisCO large chain family. Type IV subfamily.

The enzyme catalyses 5-(methylsulfanyl)-D-ribulose 1-phosphate = S-methyl-1-thio-D-xylulose 5-phosphate. The catalysed reaction is 5-(methylsulfanyl)-D-ribulose 1-phosphate = 1-(methylsulfanyl)ribulose 5-phosphate. It functions in the pathway amino-acid biosynthesis; L-methionine biosynthesis via salvage pathway. It participates in metabolic intermediate biosynthesis; 1-deoxy-D-xylulose 5-phosphate biosynthesis. Catalyzes the conversion of 5-methylthio-D-ribulose 1-phosphate (MTRu-1P) to a 3:1 mixture of 1-methylthioxylulose 5-phosphate (MTXu-5P) and 1-methylthioribulose 5-phosphate (MTRu-5P). Involved in the MTA-isoprenoid shunt of the methionine salvage pathway. This Rhodospirillum rubrum (strain ATCC 11170 / ATH 1.1.1 / DSM 467 / LMG 4362 / NCIMB 8255 / S1) protein is 5-methylthioribulose-1-phosphate isomerase.